The sequence spans 488 residues: Proline--tRNA ligase (488 aa).

This sequence belongs to the class-II aminoacyl-tRNA synthetase family. ProS type 3 subfamily. Homodimer.

Its subcellular location is the cytoplasm. The catalysed reaction is tRNA(Pro) + L-proline + ATP = L-prolyl-tRNA(Pro) + AMP + diphosphate. Functionally, catalyzes the attachment of proline to tRNA(Pro) in a two-step reaction: proline is first activated by ATP to form Pro-AMP and then transferred to the acceptor end of tRNA(Pro). The polypeptide is Proline--tRNA ligase (Borreliella afzelii (strain PKo) (Borrelia afzelii)).